Consider the following 283-residue polypeptide: Probable cytochrome c oxidase subunit 3 (283 aa).

Transmembrane regions (helical) follow at residues 26–46 (PWPVLTSFALLLLVIGGVSFM), 51–71 (FNIYILSAGIISVGYCLYSWW), 94–114 (IGMALFILTEIVFFGVFFASF), 179–199 (CVTALALTILLGIFFTTMQAY), 217–237 (FYLATGFHGAHVIIGTIFLII), and 261–281 (AWYWHFVDVVWLFLFTFVYIF).

It belongs to the cytochrome c oxidase subunit 3 family.

It localises to the cell membrane. It carries out the reaction 4 Fe(II)-[cytochrome c] + O2 + 8 H(+)(in) = 4 Fe(III)-[cytochrome c] + 2 H2O + 4 H(+)(out). This Rickettsia conorii (strain ATCC VR-613 / Malish 7) protein is Probable cytochrome c oxidase subunit 3 (ctaE).